Reading from the N-terminus, the 573-residue chain is Putative cytochrome c oxidase subunit 1-beta (573 aa).

The chain crosses the membrane as a helical span at residues 53-73 (VIGHLYLATSFGFFLLGGVLA). Position 100 (His100) interacts with Fe(II)-heme a. 6 helical membrane passes run 103 to 123 (IMML…IMPL), 141 to 161 (WMYL…GGAA), 188 to 208 (GLVV…STII), 227 to 247 (ILFT…ALLM), 272 to 292 (LFWF…FGIV), and 304 to 324 (IFGY…SAVV). Residues His278 and Tyr282 each coordinate Cu cation. Residues 278–282 (HPEVY) constitute a cross-link (1'-histidyl-3'-tyrosine (His-Tyr)). Cu cation-binding residues include His327 and His328. A run of 2 helical transmembrane segments spans residues 329-349 (MFAT…LIAV) and 373-393 (MLWA…GVLI). Residue His411 participates in heme a3 binding. 3 consecutive transmembrane segments (helical) span residues 412-432 (LHYV…YFWW), 447-467 (IHFW…HWLG), and 490-510 (ISSI…YNVW). His413 contributes to the Fe(II)-heme a binding site.

It belongs to the heme-copper respiratory oxidase family. As to quaternary structure, associates with subunits II, III and IV to form cytochrome c oxidase. The cofactor is Cu(2+). Requires heme as cofactor.

The protein localises to the cell membrane. The enzyme catalyses 4 Fe(II)-[cytochrome c] + O2 + 8 H(+)(in) = 4 Fe(III)-[cytochrome c] + 2 H2O + 4 H(+)(out). It participates in energy metabolism; oxidative phosphorylation. Its function is as follows. Cytochrome c oxidase is the component of the respiratory chain that catalyzes the reduction of oxygen to water. Subunits 1-3 form the functional core of the enzyme complex. CO I is the catalytic subunit of the enzyme. Electrons originating in cytochrome c are transferred via the copper A center of subunit 2 and heme A of subunit 1 to the bimetallic center formed by heme A3 and copper B. The polypeptide is Putative cytochrome c oxidase subunit 1-beta (ctaD2) (Streptomyces coelicolor (strain ATCC BAA-471 / A3(2) / M145)).